The chain runs to 81 residues: uncharacterized protein (81 aa).

Transmembrane regions (helical) follow at residues 1–21 (MTLFSFFLVILSFYYILFSLL) and 27–47 (IFIYIKIIPTVSYFHFNHHFF).

The protein resides in the membrane. This is an uncharacterized protein from Saccharomyces cerevisiae (strain ATCC 204508 / S288c) (Baker's yeast).